We begin with the raw amino-acid sequence, 1906 residues long: Serine protease/ABC transporter B family protein tagB (1906 aa).

An N-terminal signal peptide occupies residues 1-31 (MKFQFSSPSKIFLFSSVILILIFIGIKFELL). The disordered stretch occupies residues 96 to 134 (INNNNNNNNKLNNNNNNNNNNNNNNNNNNNNNNNNNNNN). Residues 356 to 763 (PTVIFGTKDK…ASSTNPSNAI (408 aa)) enclose the Peptidase S8 domain. Active-site charge relay system residues include aspartate 387 and histidine 432. Residues asparagine 594, asparagine 621, and asparagine 672 are each glycosylated (N-linked (GlcNAc...) asparagine). Serine 695 functions as the Charge relay system in the catalytic mechanism. Residues asparagine 747 and asparagine 823 are each glycosylated (N-linked (GlcNAc...) asparagine). 3 consecutive transmembrane segments (helical) span residues 1011–1031 (YIII…LMWI), 1076–1096 (FIIE…ASIL), and 1121–1141 (FIII…GSWI). The ABC transmembrane type-1 domain occupies 1080–1363 (LTIATACSLV…LFGVYVSYIQ (284 aa)). An N-linked (GlcNAc...) asparagine glycan is attached at asparagine 1172. The next 3 helical transmembrane spans lie at 1210 to 1230 (LVFI…AVPI), 1309 to 1329 (WLLI…LVIQ), and 1332 to 1352 (FTVG…DASS). Residues 1385-1455 (LEEEEADRLA…NNNNNIGNLD (71 aa)) form a disordered region. Residues 1396–1405 (LSGGGGGGGD) show a composition bias toward gly residues. The span at 1407–1420 (GDDKKDKQNIENGK) shows a compositional bias: basic and acidic residues. Positions 1518 to 1756 (IEFKNVSFRY…KGKYYRMFSE (239 aa)) constitute an ABC transporter domain. A glycan (N-linked (GlcNAc...) asparagine) is linked at asparagine 1522. An ATP-binding site is contributed by 1553–1560 (GPSGSGKS). The N-linked (GlcNAc...) asparagine glycan is linked to asparagine 1658. A disordered region spans residues 1757–1906 (DKDDTPLQNN…QMDEENDEER (150 aa)). Low complexity-rich tracts occupy residues 1765 to 1779 (NNNN…NNNN) and 1814 to 1871 (EQQE…DYDQ). Residues 1872 to 1886 (VPPPPPLPSESPSPP) show a composition bias toward pro residues.

This sequence in the C-terminal section; belongs to the ABC transporter superfamily. ABCB family. Multidrug resistance exporter (TC 3.A.1.201) subfamily. It in the N-terminal section; belongs to the peptidase S8 family.

The protein resides in the membrane. Its function is as follows. Intercellular communication via tagB may mediate integration of cellular differentiation with morphogenesis. In Dictyostelium discoideum (Social amoeba), this protein is Serine protease/ABC transporter B family protein tagB (tagB).